The primary structure comprises 44 residues: Hyaluronidase CdtHya1 (44 aa).

It belongs to the glycosyl hydrolase 56 family. In terms of assembly, monomer. Post-translationally, contains disulfide bonds. In terms of processing, glycosylated. As to expression, expressed by the venom gland.

The protein localises to the secreted. The catalysed reaction is Random hydrolysis of (1-&gt;4)-linkages between N-acetyl-beta-D-glucosamine and D-glucuronate residues in hyaluronate.. Snake venom endo-hyaluronidase that degrades hyaluronan to smaller oligosaccharide fragments. In venom, it is not toxic by itself, but increases the diffusion of other venom proteins such as crotoxin (a neurotoxic and myotoxic PLA2) by degrading the extracellular matrix. In addition, it displays antiedematogenic activity, since it significantly diminishes the oedematogenic activity of crotoxin (probably by direct substrate hydrolysis, since hyaluronan possesses strong water-binding capacity). The sequence is that of Hyaluronidase CdtHya1 from Crotalus durissus terrificus (South American rattlesnake).